The chain runs to 393 residues: Staphopain B (393 aa).

An N-terminal signal peptide occupies residues Met1–Ala36. The propeptide occupies Asp37–Glu219. Catalysis depends on residues Cys243, His340, and Asn360.

It belongs to the peptidase C47 family. In the cytoplasm, prematurely activated/folded SspB forms a stable non-covalent complex with SspC. In terms of processing, proteolytically cleaved by staphylococcal serine protease (SspA).

It localises to the secreted. With respect to regulation, prematurely activated/folded staphopain B is inhibited by staphostatin B (SspC), which is probably required to protect staphylococcal cytoplasmic proteins from degradation by SspB. Its function is as follows. Cysteine protease that plays an important role in the inhibition of host innate immune response. Degrades host elastin, fibrogen, fibronectin and kininogen. Blocks phagocytosis of opsonised S.aureus by neutrophils and monocytes by inducing their death in a proteolytic activity-dependent manner. Decreases surface expression of the 'don't eat me' signal CD31 on neutrophils. Cleaves host galectin-3/LGALS3, thereby inhibiting the neutrophil-activating ability of the lectin. In Staphylococcus aureus, this protein is Staphopain B (sspB).